A 361-amino-acid polypeptide reads, in one-letter code: [LysW]-lysine hydrolase (361 aa).

His-67 lines the Zn(2+) pocket. Asp-69 is a catalytic residue. Asp-91 contributes to the Zn(2+) binding site. The Proton acceptor role is filled by Glu-124. Zn(2+) is bound by residues Glu-125, Glu-148, and His-326.

This sequence belongs to the peptidase M20A family. LysK subfamily. Homotetramer and homooctamer. Zn(2+) serves as cofactor. It depends on Co(2+) as a cofactor.

The protein localises to the cytoplasm. The catalysed reaction is [amino-group carrier protein]-C-terminal-gamma-(L-lysyl)-L-glutamate + H2O = [amino-group carrier protein]-C-terminal-L-glutamate + L-lysine. The protein operates within amino-acid biosynthesis; L-lysine biosynthesis via AAA pathway; L-lysine from L-alpha-aminoadipate (Thermus route): step 5/5. In terms of biological role, catalyzes the release of L-lysine from [LysW]-gamma-L-lysine. In vitro, can deacetylate both N(2)-acetyl-L-lysine and N(2)-acetyl-L-ornithine. This is [LysW]-lysine hydrolase from Thermus thermophilus (strain ATCC BAA-163 / DSM 7039 / HB27).